An 80-amino-acid polypeptide reads, in one-letter code: RNA-binding protein Hfq (80 aa).

The Sm domain occupies 10–69 (DPFLNLLRKEHVPVSIYLVNGIKLQGHIESFDQYVVLLRNTVTQMVYKHAISTVVPGRPV).

It belongs to the Hfq family. As to quaternary structure, homohexamer.

In terms of biological role, RNA chaperone that binds small regulatory RNA (sRNAs) and mRNAs to facilitate mRNA translational regulation in response to envelope stress, environmental stress and changes in metabolite concentrations. Also binds with high specificity to tRNAs. The polypeptide is RNA-binding protein Hfq (Leptothrix cholodnii (strain ATCC 51168 / LMG 8142 / SP-6) (Leptothrix discophora (strain SP-6))).